We begin with the raw amino-acid sequence, 901 residues long: HTH-type transcriptional regulator MalT (901 aa).

39-46 contributes to the ATP binding site; sequence SPAGYGKT. The region spanning 829–894 is the HTH luxR-type domain; the sequence is ELIRTSPLTQ…AAVQHAQKLL (66 aa). The H-T-H motif DNA-binding region spans 853–872; the sequence is NEQIAGELEVAATTIKTHIR.

It belongs to the MalT family. As to quaternary structure, monomer in solution. Oligomerizes to an active state in the presence of the positive effectors ATP and maltotriose.

Activated by ATP and maltotriose, which are both required for DNA binding. Its function is as follows. Positively regulates the transcription of the maltose regulon whose gene products are responsible for uptake and catabolism of malto-oligosaccharides. Specifically binds to the promoter region of its target genes, recognizing a short DNA motif called the MalT box. The polypeptide is HTH-type transcriptional regulator MalT (Escherichia coli O6:K15:H31 (strain 536 / UPEC)).